The primary structure comprises 238 residues: 15,16-dihydrobiliverdin:ferredoxin oxidoreductase (238 aa).

Belongs to the HY2 family.

The catalysed reaction is 15,16-dihydrobiliverdin + oxidized 2[4Fe-4S]-[ferredoxin] = biliverdin IXalpha + reduced 2[4Fe-4S]-[ferredoxin] + 2 H(+). In terms of biological role, catalyzes the two-electron reduction of biliverdin IX-alpha at the C15 methine bridge. This chain is 15,16-dihydrobiliverdin:ferredoxin oxidoreductase, found in Prochlorococcus marinus (strain NATL1A).